Consider the following 303-residue polypeptide: Protoheme IX farnesyltransferase (303 aa).

The next 8 helical transmembrane spans lie at 25–45 (MGLVQGNLIPAFAGSWLAIVL), 54–74 (IPQILLMLIGSTLIMGGACAL), 104–124 (LLILSFGMMVIGEIALFILNI), 125–145 (PSGVIGLMGIIGYVSFYSIWS), 151–171 (WNTVIGAFPGAVPPVIGWTAI), 179–199 (AIALFLVIFCWQPIHFYALAI), 228–248 (VWLILLLPLPFLLSDLGPVFI), and 280–300 (FVYSLNYLVLFFALVVIISLI).

It belongs to the UbiA prenyltransferase family. Protoheme IX farnesyltransferase subfamily. Interacts with CtaA.

It localises to the cell membrane. The enzyme catalyses heme b + (2E,6E)-farnesyl diphosphate + H2O = Fe(II)-heme o + diphosphate. It functions in the pathway porphyrin-containing compound metabolism; heme O biosynthesis; heme O from protoheme: step 1/1. Its function is as follows. Converts heme B (protoheme IX) to heme O by substitution of the vinyl group on carbon 2 of heme B porphyrin ring with a hydroxyethyl farnesyl side group. This chain is Protoheme IX farnesyltransferase, found in Staphylococcus carnosus (strain TM300).